The following is a 1262-amino-acid chain: Protein stoned-B (1262 aa).

4 short sequence motifs (NPF) span residues 3–5 (NPF), 19–21 (NPF), 33–35 (NPF), and 43–45 (NPF). A disordered region spans residues 17-36 (AANPFLMQSEPEPSSDNPFM). The interval 49 to 189 (ADDLELGAEP…DVSVDSGSSA (141 aa)) is disordered. Acidic residues predominate over residues 50–60 (DDLELGAEPEA). Residues 101–111 (PPQSQPQLQSH) are compositionally biased toward low complexity. Pro residues predominate over residues 115–124 (HPPPPRPLVP). Residues 128–145 (TQDLISTVSSQLDETSSE) are compositionally biased toward polar residues. Residues 172-189 (DSGLADLLDVSVDSGSSA) show a composition bias toward low complexity. Residues 210–212 (NPF) carry the NPF 5 motif. 2 disordered regions span residues 225-452 (VPLP…SPPT) and 474-507 (EEMD…NFAP). The segment covering 233–272 (KQPPRPPPPRPAPPRPAPPGQAAPQRPPPPLAAVNPPPAA) has biased composition (pro residues). Acidic residues predominate over residues 325 to 345 (DLDETIGEGEPPEQEEPDTEQ). A compositionally biased stretch (polar residues) spans 384-401 (QVNNMAAPSGTASTQRAT). A compositionally biased stretch (acidic residues) spans 417–429 (DDEDEPEAMQEPE). The short motif at 493–495 (NPF) is the NPF 6 element. Ser-623 and Ser-626 each carry phosphoserine. The disordered stretch occupies residues 643 to 709 (SGVAPQLAPP…QDTPQTPLYD (67 aa)). Residues 673–675 (NPF) carry the NPF 7 motif. In terms of domain architecture, SHD spans 728–902 (GWEMQLRQPN…KIPALRERAL (175 aa)). An interaction with Syt region spans residues 847–1108 (KEFGSDLKKL…KGIERILGAV (262 aa)). The MHD domain occupies 906-1219 (MEEVQVTAVD…ARHEYKVGIE (314 aa)). The disordered stretch occupies residues 1226–1262 (TNAYLAATRPIREEPPTTATKPTASPVAPSDSDTDSN). The span at 1241–1254 (PTTATKPTASPVAP) shows a compositional bias: low complexity.

Belongs to the Stoned B family. In terms of assembly, interacts with the second C2 domain of Syt.

It is found in the cytoplasm. The protein resides in the synapse. In terms of biological role, adapter protein involved in endocytic recycling of synaptic vesicles membranes. May act by mediating the retrieval of synaptotagmin protein Syt from the plasma membrane, thereby facilitating the internalization of multiple synaptic vesicles from the plasma membrane. This chain is Protein stoned-B (stnB), found in Drosophila melanogaster (Fruit fly).